We begin with the raw amino-acid sequence, 90 residues long: Probable small nuclear ribonucleoprotein E (90 aa).

Residues 14 to 89 (VNLIFRYLQN…ITLIHAAQQE (76 aa)) enclose the Sm domain.

This sequence belongs to the snRNP Sm proteins family. Core component of the spliceosomal U1, U2, U4 and U5 small nuclear ribonucleoproteins (snRNPs), the building blocks of the spliceosome.

Its subcellular location is the nucleus. The protein localises to the cytoplasm. It is found in the cytosol. In terms of biological role, plays a role in pre-mRNA splicing as a core component of the spliceosomal U1, U2, U4 and U5 small nuclear ribonucleoproteins (snRNPs), the building blocks of the spliceosome. The polypeptide is Probable small nuclear ribonucleoprotein E (snr-6) (Caenorhabditis elegans).